Here is a 386-residue protein sequence, read N- to C-terminus: Alanine racemase (386 aa).

Lysine 48 serves as the catalytic Proton acceptor; specific for D-alanine. Lysine 48 is subject to N6-(pyridoxal phosphate)lysine. Arginine 147 serves as a coordination point for substrate. Tyrosine 279 acts as the Proton acceptor; specific for L-alanine in catalysis. Residue methionine 327 participates in substrate binding.

It belongs to the alanine racemase family. Requires pyridoxal 5'-phosphate as cofactor.

The enzyme catalyses L-alanine = D-alanine. The protein operates within amino-acid biosynthesis; D-alanine biosynthesis; D-alanine from L-alanine: step 1/1. Functionally, catalyzes the interconversion of L-alanine and D-alanine. May also act on other amino acids. The chain is Alanine racemase (alr) from Prochlorococcus marinus (strain SARG / CCMP1375 / SS120).